The chain runs to 312 residues: Olfactory receptor 10D3 (312 aa).

The Extracellular segment spans residues 1–26 (MEIKNCSVVTEFILLGIPHTEGFETL). Residue asparagine 5 is glycosylated (N-linked (GlcNAc...) asparagine). Residues 27 to 47 (LFVLFLPFYACTLVGNVSILV) traverse the membrane as a helical segment. Residues 48 to 57 (AVISSTRLHT) are Cytoplasmic-facing. A helical membrane pass occupies residues 58 to 78 (PMYFFLGNLSVFDMGFSSVTC). The Extracellular segment spans residues 79–97 (PKMLFYLMGLSRLISYQDC). Residues cysteine 97 and cysteine 179 are joined by a disulfide bond. The chain crosses the membrane as a helical span at residues 98-118 (VSQLFFFHFLGSIECFLYTVM). Residues 119-139 (AYDRFAAICHPLRYSVIMNSK) lie on the Cytoplasmic side of the membrane. A helical membrane pass occupies residues 140-160 (ICVALAVGTWLLGCFHSSVLT). The Extracellular segment spans residues 161–197 (SLTFTLPYCGPNEVDHFFCDIPAILPLASADTSLAQR). Residues 198–218 (VSFTNVGLVSLVCFLLILLSY) traverse the membrane as a helical segment. Residues 219–239 (TRITISILSIQSTEGRQRAFS) are Cytoplasmic-facing. Residues 240–260 (TCSAHLIAILCAYGPIITIYL) form a helical membrane-spanning segment. Topologically, residues 261 to 266 (QPTPNP) are extracellular. Residues 267–287 (MLGTVVQILMNLVGPMLNPLI) traverse the membrane as a helical segment. The Cytoplasmic portion of the chain corresponds to 288–312 (YTLRNKEVKIALKKILHGKGSVSEG).

Belongs to the G-protein coupled receptor 1 family.

It localises to the cell membrane. Functionally, potential odorant receptor. This Mus musculus (Mouse) protein is Olfactory receptor 10D3.